A 1325-amino-acid polypeptide reads, in one-letter code: NHS-like protein 3 (1325 aa).

Positions 53-85 (LEDLHTEAQEGLKILQQEEEDTSSKERNESLEN) form a coiled coil. Disordered regions lie at residues 68 to 92 (QQEE…SGHS), 111 to 131 (QGST…KRRS), 291 to 348 (CSAS…KGKC), 368 to 570 (MSVS…AKTS), 595 to 614 (QTNT…TTVK), 829 to 891 (EVNG…MEES), 935 to 981 (LLST…VSEF), 1084 to 1138 (VGED…SSAV), 1243 to 1272 (GTKK…ENAT), and 1293 to 1313 (SDQV…EQAS). A compositionally biased stretch (low complexity) spans 296 to 334 (ASKGSMASASPSSSRSGSGTNQAPPTTSPSRSNSQSSET). A compositionally biased stretch (polar residues) spans 335 to 344 (IVSNSSTISS). Residues 369–378 (SVSSSSSWKS) are compositionally biased toward low complexity. Positions 400-412 (VRNSHSFSRSLSV) are enriched in polar residues. A compositionally biased stretch (basic and acidic residues) spans 428–447 (LHHENMQRQREQGDIQDPKD). Positions 450-460 (PNNNEQTNRDI) are enriched in polar residues. Positions 515–524 (KTRECGENFD) are enriched in basic and acidic residues. Positions 528–541 (SPSSGYSSQSGTPT) are enriched in low complexity. The span at 834–850 (SPPPSPPPEHHPPPPPI) shows a compositional bias: pro residues. Polar residues-rich tracts occupy residues 935 to 948 (LLST…SSPE) and 1088 to 1100 (QVNN…TEPT). The segment covering 1124-1138 (KSNSPAKSSSASSAV) has biased composition (low complexity). Polar residues predominate over residues 1302–1311 (RAQSLGNQEQ).

Able to directly activate the TNF-NFkappaB signaling pathway. The chain is NHS-like protein 3 (nhsl3) from Danio rerio (Zebrafish).